Here is an 808-residue protein sequence, read N- to C-terminus: DNA replication licensing factor MCM3 (808 aa).

An N-acetylalanine modification is found at Ala2. Phosphoserine is present on residues Ser160 and Ser275. Position 293 is an N6-acetyllysine (Lys293). An MCM domain is found at 295 to 502 (IFDQLAKSLA…QDREISDHVL (208 aa)). ADP contacts are provided by Gln353, Leu393, Glu394, Ala395, and Ala397. Residues 477 to 480 (SRFD) carry the Arginine finger motif. An ATP-binding site is contributed by Ala523. Ser535 carries the phosphoserine; by ATM modification. Position 547 is an N6-acetyllysine (Lys547). Ser611 carries the phosphoserine modification. Positions 662 to 739 (KKRKKRSEDE…ETKESQKVEL (78 aa)) are disordered. Residue Arg664 coordinates ATP. 2 positions are modified to phosphoserine: Ser668 and Ser672. Acidic residues-rich tracts occupy residues 670–681 (DESETEDEEEKS) and 704–717 (SYDP…EEEM). Thr674 is modified (phosphothreonine). Ser681 is subject to Phosphoserine. Position 708 is a phosphotyrosine (Tyr708). Residue Ser711 is modified to Phosphoserine. 3 positions are modified to phosphothreonine: Thr713, Thr722, and Thr725. The span at 727–739 (DSQETKESQKVEL) shows a compositional bias: basic and acidic residues. Residues Ser728 and Ser734 each carry the phosphoserine modification.

Belongs to the MCM family. As to quaternary structure, component of the MCM2-7 complex. The complex forms a toroidal hexameric ring with the proposed subunit order MCM2-MCM6-MCM4-MCM7-MCM3-MCM5. Component of the CMG helicase complex, a hexameric ring of related MCM2-7 subunits stabilized by CDC45 and the tetrameric GINS complex. Associated with the replication-specific DNA polymerase alpha. Interacts with MCMBP. Interacts with ANKRD17. Interacts with MCM3AP isoform MCM3AP; this interaction leads to MCM3 acetylation. Post-translationally, acetylated by MCM3AP. O-glycosylated (O-GlcNAcylated), in a cell cycle-dependent manner.

It is found in the nucleus. The protein localises to the chromosome. The catalysed reaction is ATP + H2O = ADP + phosphate + H(+). Its function is as follows. Acts as a component of the MCM2-7 complex (MCM complex) which is the replicative helicase essential for 'once per cell cycle' DNA replication initiation and elongation in eukaryotic cells. Core component of CDC45-MCM-GINS (CMG) helicase, the molecular machine that unwinds template DNA during replication, and around which the replisome is built. The active ATPase sites in the MCM2-7 ring are formed through the interaction surfaces of two neighboring subunits such that a critical structure of a conserved arginine finger motif is provided in trans relative to the ATP-binding site of the Walker A box of the adjacent subunit. The six ATPase active sites, however, are likely to contribute differentially to the complex helicase activity. Required for the entry in S phase and for cell division. The chain is DNA replication licensing factor MCM3 from Homo sapiens (Human).